The primary structure comprises 304 residues: Sulfate adenylyltransferase subunit 2 1 (304 aa).

It belongs to the PAPS reductase family. CysD subfamily. Heterodimer composed of CysD, the smaller subunit, and CysN.

The enzyme catalyses sulfate + ATP + H(+) = adenosine 5'-phosphosulfate + diphosphate. The protein operates within sulfur metabolism; hydrogen sulfide biosynthesis; sulfite from sulfate: step 1/3. Its function is as follows. With CysN forms the ATP sulfurylase (ATPS) that catalyzes the adenylation of sulfate producing adenosine 5'-phosphosulfate (APS) and diphosphate, the first enzymatic step in sulfur assimilation pathway. APS synthesis involves the formation of a high-energy phosphoric-sulfuric acid anhydride bond driven by GTP hydrolysis by CysN coupled to ATP hydrolysis by CysD. The protein is Sulfate adenylyltransferase subunit 2 1 of Marinobacter nauticus (strain ATCC 700491 / DSM 11845 / VT8) (Marinobacter aquaeolei).